The primary structure comprises 422 residues: Tryptophan synthase beta chain 1 (422 aa).

Position 107 is an N6-(pyridoxal phosphate)lysine (Lys107).

This sequence belongs to the TrpB family. Tetramer of two alpha and two beta chains. It depends on pyridoxal 5'-phosphate as a cofactor.

It catalyses the reaction (1S,2R)-1-C-(indol-3-yl)glycerol 3-phosphate + L-serine = D-glyceraldehyde 3-phosphate + L-tryptophan + H2O. Its pathway is amino-acid biosynthesis; L-tryptophan biosynthesis; L-tryptophan from chorismate: step 5/5. In terms of biological role, the beta subunit is responsible for the synthesis of L-tryptophan from indole and L-serine. This Sulfurisphaera tokodaii (strain DSM 16993 / JCM 10545 / NBRC 100140 / 7) (Sulfolobus tokodaii) protein is Tryptophan synthase beta chain 1 (trpB1).